The primary structure comprises 176 residues: Pro-glucagon (176 aa).

A signal peptide spans Met-1–Gln-20. Polar residues predominate over residues Asn-25–Ala-35. Residues Asn-25 to Thr-59 are disordered. Ser-54 is modified (phosphoserine). Positions Asn-84–Ala-89 are excised as a propeptide. A phosphoserine mark is found at Ser-105 and Ser-108. Residue Arg-127 is modified to Arginine amide. A propeptide spanning residues Asp-131–Arg-145 is cleaved from the precursor. Phosphoserine occurs at positions 150 and 152.

Belongs to the glucagon family. Post-translationally, proglucagon is post-translationally processed in a tissue-specific manner in pancreatic A cells and intestinal L cells. In pancreatic A cells, the major bioactive hormone is glucagon cleaved by PCSK2/PC2. In the intestinal L cells PCSK1/PC1 liberates GLP-1, GLP-2, glicentin and oxyntomodulin. GLP-1 is further N-terminally truncated by post-translational processing in the intestinal L cells resulting in GLP-1(7-37) GLP-1-(7-36)amide. The C-terminal amidation is neither important for the metabolism of GLP-1 nor for its effects on the endocrine pancreas. As to expression, glucagon is secreted in the A cells of the islets of Langerhans. GLP-1, GLP-2, oxyntomodulin and glicentin are secreted from enteroendocrine cells throughout the gastrointestinal tract. GLP-1 and GLP-2 are also secreted in selected neurons in the brain.

The protein resides in the secreted. In terms of biological role, plays a key role in glucose metabolism and homeostasis. Regulates blood glucose by increasing gluconeogenesis and decreasing glycolysis. A counterregulatory hormone of insulin, raises plasma glucose levels in response to insulin-induced hypoglycemia. Plays an important role in initiating and maintaining hyperglycemic conditions in diabetes. Its function is as follows. Potent stimulator of glucose-dependent insulin release. Also stimulates insulin release in response to IL6. Plays important roles on gastric motility and the suppression of plasma glucagon levels. May be involved in the suppression of satiety and stimulation of glucose disposal in peripheral tissues, independent of the actions of insulin. Has growth-promoting activities on intestinal epithelium. May also regulate the hypothalamic pituitary axis (HPA) via effects on LH, TSH, CRH, oxytocin, and vasopressin secretion. Increases islet mass through stimulation of islet neogenesis and pancreatic beta cell proliferation. Inhibits beta cell apoptosis. Functionally, stimulates intestinal growth and up-regulates villus height in the small intestine, concomitant with increased crypt cell proliferation and decreased enterocyte apoptosis. The gastrointestinal tract, from the stomach to the colon is the principal target for GLP-2 action. Plays a key role in nutrient homeostasis, enhancing nutrient assimilation through enhanced gastrointestinal function, as well as increasing nutrient disposal. Stimulates intestinal glucose transport and decreases mucosal permeability. Significantly reduces food intake. Inhibits gastric emptying in humans. Suppression of gastric emptying may lead to increased gastric distension, which may contribute to satiety by causing a sensation of fullness. In terms of biological role, may modulate gastric acid secretion and the gastro-pyloro-duodenal activity. May play an important role in intestinal mucosal growth in the early period of life. This Ovis aries (Sheep) protein is Pro-glucagon (GCG).